Reading from the N-terminus, the 253-residue chain is tRNA pseudouridine synthase A (253 aa).

Catalysis depends on Asp52, which acts as the Nucleophile. Residue Tyr111 coordinates substrate.

The protein belongs to the tRNA pseudouridine synthase TruA family. Homodimer.

It carries out the reaction uridine(38/39/40) in tRNA = pseudouridine(38/39/40) in tRNA. In terms of biological role, formation of pseudouridine at positions 38, 39 and 40 in the anticodon stem and loop of transfer RNAs. In Methylobacterium radiotolerans (strain ATCC 27329 / DSM 1819 / JCM 2831 / NBRC 15690 / NCIMB 10815 / 0-1), this protein is tRNA pseudouridine synthase A.